We begin with the raw amino-acid sequence, 348 residues long: MAATLGPLGSWQQWRRCLSARDGSRMLLLLLLLGSGQGPQQVGAGQTFEYLKREHSLSKPYQGVGTGSSSLWNLMGNAMVMTQYIRLTPDMQSKQGALWNRVPCFLRDWELQVHFKIHGQGKKNLHGDGLAIWYTKDRMQPGPVFGNMDKFVGLGVFVDTYPNEEKQQERVFPYISAMVNNGSLSYDHERDGRPTELGGCTAIVRNLHYDTFLVIRYVKRHLTIMMDIDGKHEWRDCIEVPGVRLPRGYYFGTSSITGDLSDNHDVISLKLFELTVERTPEEEKLHRDVFLPSVDNMKLPEMTAPLPPLSGLALFLIVFFSLVFSVFAIVIGIILYNKWQEQSRKRFY.

Positions 1 to 44 (MAATLGPLGSWQQWRRCLSARDGSRMLLLLLLLGSGQGPQQVGA) are cleaved as a signal peptide. The Lumenal portion of the chain corresponds to 45–313 (GQTFEYLKRE…APLPPLSGLA (269 aa)). Positions 49 to 274 (EYLKREHSLS…DVISLKLFEL (226 aa)) constitute an L-type lectin-like domain. 2 residues coordinate a carbohydrate: Ser93 and Asp128. Ca(2+) is bound by residues Asp159, Tyr161, and Asn163. 161 to 163 (YPN) serves as a coordination point for a carbohydrate. Asn181 is a glycosylation site (N-linked (GlcNAc...) (high mannose) asparagine). Residue His188 coordinates a carbohydrate. Asp191 provides a ligand contact to Ca(2+). A disulfide bridge connects residues Cys200 and Cys237. 258–260 (GDL) lines the a carbohydrate pocket. Residues 314–336 (LFLIVFFSLVFSVFAIVIGIILY) traverse the membrane as a helical segment. The Cytoplasmic segment spans residues 337 to 348 (NKWQEQSRKRFY). Residues 344–346 (RKR) carry the Endoplasmic reticulum retention signal motif.

Expressed in numerous tissues. Highest expression in skeletal muscle and kidney, intermediate levels in heart, liver and placenta, low levels in brain, thymus, spleen, small intestine and lung.

Its subcellular location is the endoplasmic reticulum membrane. The protein resides in the golgi apparatus membrane. Its function is as follows. May be involved in the regulation of export from the endoplasmic reticulum of a subset of glycoproteins. May function as a regulator of ERGIC-53. The chain is VIP36-like protein (LMAN2L) from Homo sapiens (Human).